The primary structure comprises 464 residues: Glutamate--tRNA ligase (464 aa).

The 'HIGH' region signature appears at 11 to 21 (PSPTGYLHIGG). A 'KMSKS' region motif is present at residues 253–257 (KLSKR). Lys-256 is an ATP binding site.

Belongs to the class-I aminoacyl-tRNA synthetase family. Glutamate--tRNA ligase type 1 subfamily. Monomer.

It is found in the cytoplasm. It carries out the reaction tRNA(Glu) + L-glutamate + ATP = L-glutamyl-tRNA(Glu) + AMP + diphosphate. In terms of biological role, catalyzes the attachment of glutamate to tRNA(Glu) in a two-step reaction: glutamate is first activated by ATP to form Glu-AMP and then transferred to the acceptor end of tRNA(Glu). This is Glutamate--tRNA ligase from Metamycoplasma arthritidis (strain 158L3-1) (Mycoplasma arthritidis).